A 198-amino-acid polypeptide reads, in one-letter code: Methyl-coenzyme M reductase I operon protein C (198 aa).

As to quaternary structure, MCR is composed of three subunits: alpha, beta, and gamma. The function of proteins C and D is not known.

This chain is Methyl-coenzyme M reductase I operon protein C (mcrC), found in Methanothermobacter marburgensis (strain ATCC BAA-927 / DSM 2133 / JCM 14651 / NBRC 100331 / OCM 82 / Marburg) (Methanobacterium thermoautotrophicum).